A 252-amino-acid polypeptide reads, in one-letter code: Trans-aconitate 2-methyltransferase (252 aa).

The protein belongs to the methyltransferase superfamily. Tam family.

It is found in the cytoplasm. The catalysed reaction is trans-aconitate + S-adenosyl-L-methionine = (E)-3-(methoxycarbonyl)pent-2-enedioate + S-adenosyl-L-homocysteine. Catalyzes the S-adenosylmethionine monomethyl esterification of trans-aconitate. This chain is Trans-aconitate 2-methyltransferase, found in Escherichia coli (strain SE11).